The primary structure comprises 443 residues: Thymidine phosphorylase (443 aa).

It belongs to the thymidine/pyrimidine-nucleoside phosphorylase family. In terms of assembly, homodimer.

The catalysed reaction is thymidine + phosphate = 2-deoxy-alpha-D-ribose 1-phosphate + thymine. It participates in pyrimidine metabolism; dTMP biosynthesis via salvage pathway; dTMP from thymine: step 1/2. Its function is as follows. The enzymes which catalyze the reversible phosphorolysis of pyrimidine nucleosides are involved in the degradation of these compounds and in their utilization as carbon and energy sources, or in the rescue of pyrimidine bases for nucleotide synthesis. The sequence is that of Thymidine phosphorylase from Shewanella baltica (strain OS195).